The sequence spans 168 residues: SsrA-binding protein (168 aa).

The segment at M1–I20 is disordered.

This sequence belongs to the SmpB family.

The protein resides in the cytoplasm. Functionally, required for rescue of stalled ribosomes mediated by trans-translation. Binds to transfer-messenger RNA (tmRNA), required for stable association of tmRNA with ribosomes. tmRNA and SmpB together mimic tRNA shape, replacing the anticodon stem-loop with SmpB. tmRNA is encoded by the ssrA gene; the 2 termini fold to resemble tRNA(Ala) and it encodes a 'tag peptide', a short internal open reading frame. During trans-translation Ala-aminoacylated tmRNA acts like a tRNA, entering the A-site of stalled ribosomes, displacing the stalled mRNA. The ribosome then switches to translate the ORF on the tmRNA; the nascent peptide is terminated with the 'tag peptide' encoded by the tmRNA and targeted for degradation. The ribosome is freed to recommence translation, which seems to be the essential function of trans-translation. The chain is SsrA-binding protein from Mycobacterium ulcerans (strain Agy99).